Consider the following 1893-residue polypeptide: Endoribonuclease Dicer (1893 aa).

Residues 41–217 (LLEAALDHNT…DLEEKIQKLE (177 aa)) form the Helicase ATP-binding domain. Position 54–61 (54–61 (LNSGSGKT)) interacts with ATP. Residues 165-168 (DECH) carry the DECH box motif. The tract at residues 400 to 424 (VSWSDSEDDDDEDEEIEEKEKTETS) is disordered. Residues 404 to 416 (DSEDDDDEDEEIE) show a composition bias toward acidic residues. One can recognise a Helicase C-terminal domain in the interval 424–593 (SFPSPFTNIL…SIDCGNTESE (170 aa)). The region spanning 621–713 (AIGHINRYCA…MPVGKETVKY (93 aa)) is the Dicer dsRNA-binding fold domain. A disordered region spans residues 718-737 (DLHDEEETSVPGRPGSTKRR). The region spanning 886–1036 (KFVEDIEKSE…LVPELCAIHP (151 aa)) is the PAZ domain. 2 consecutive RNase III domains span residues 1249 to 1380 (TSDM…ETSG) and 1637 to 1795 (FENF…MDSG). Mg(2+) contacts are provided by Glu1293, Asp1371, Glu1374, Glu1676, Asp1781, and Glu1784. The 66-residue stretch at 1820–1885 (VPRSPVRELL…ARRALRSLKA (66 aa)) folds into the DRBM domain.

Belongs to the helicase family. Dicer subfamily. In terms of assembly, component of the RISC loading complex (RLC), or micro-RNA (miRNA) loading complex (miRLC), which is composed of dicer1, ago2 and tarbp2; dicer1 and tarbp2 are required to process precursor miRNAs (pre-miRNAs) to mature miRNAs and then load them onto ago2. Note that the trimeric RLC/miRLC is also referred to as RISC. Requires Mg(2+) as cofactor. Mn(2+) serves as cofactor.

The protein localises to the cytoplasm. It carries out the reaction Endonucleolytic cleavage to 5'-phosphomonoester.. Functionally, double-stranded RNA (dsRNA) endoribonuclease playing a central role in short dsRNA-mediated post-transcriptional gene silencing. Cleaves naturally occurring long dsRNAs and short hairpin pre-microRNAs (miRNA) into fragments of twenty-one to twenty-three nucleotides with 3' overhang of two nucleotides, producing respectively short interfering RNAs (siRNA) and mature microRNAs. SiRNAs and miRNAs serve as guide to direct the RNA-induced silencing complex (RISC) to complementary RNAs to degrade them or prevent their translation. Gene silencing mediated by siRNAs, also called RNA interference, controls the elimination of transcripts from mobile and repetitive DNA elements of the genome but also the degradation of exogenous RNA of viral origin for instance. The miRNA pathway on the other side is a mean to specifically regulate the expression of target genes. The polypeptide is Endoribonuclease Dicer (dicer1) (Xenopus tropicalis (Western clawed frog)).